The primary structure comprises 518 residues: Probable bifunctional methylthioribulose-1-phosphate dehydratase/enolase-phosphatase E1 (518 aa).

The segment at 1 to 247 (MAAAPPAVAV…AIKLHQIGLD (247 aa)) is methylthioribulose-1-phosphate dehydratase. Cys119 lines the substrate pocket. Positions 137 and 139 each coordinate Zn(2+). Glu162 functions as the Proton donor/acceptor; for methylthioribulose-1-phosphate dehydratase activity in the catalytic mechanism. His212 serves as a coordination point for Zn(2+). The interval 279–518 (IVLDIEGTTT…FKTITSFAEI (240 aa)) is enolase-phosphatase E1. Residues Asp282 and Glu284 each coordinate Mg(2+). Substrate contacts are provided by residues 417–418 (SS) and Lys451. Asp477 contacts Mg(2+).

It in the N-terminal section; belongs to the aldolase class II family. MtnB subfamily. The protein in the C-terminal section; belongs to the HAD-like hydrolase superfamily. MasA/MtnC family. It depends on Zn(2+) as a cofactor. Requires Mg(2+) as cofactor.

It carries out the reaction 5-(methylsulfanyl)-D-ribulose 1-phosphate = 5-methylsulfanyl-2,3-dioxopentyl phosphate + H2O. It catalyses the reaction 5-methylsulfanyl-2,3-dioxopentyl phosphate + H2O = 1,2-dihydroxy-5-(methylsulfanyl)pent-1-en-3-one + phosphate. The protein operates within amino-acid biosynthesis; L-methionine biosynthesis via salvage pathway; L-methionine from S-methyl-5-thio-alpha-D-ribose 1-phosphate: step 2/6. Its pathway is amino-acid biosynthesis; L-methionine biosynthesis via salvage pathway; L-methionine from S-methyl-5-thio-alpha-D-ribose 1-phosphate: step 3/6. It functions in the pathway amino-acid biosynthesis; L-methionine biosynthesis via salvage pathway; L-methionine from S-methyl-5-thio-alpha-D-ribose 1-phosphate: step 4/6. The sequence is that of Probable bifunctional methylthioribulose-1-phosphate dehydratase/enolase-phosphatase E1 from Populus trichocarpa (Western balsam poplar).